We begin with the raw amino-acid sequence, 417 residues long: Metal-binding activator 1 (417 aa).

A DNA-binding region (copper-fist) is located at residues 1 to 40; that stretch reads MIIFNGNKYACASCIRGHRSSTCRHSHRMLIKVRTRGRPS. Cys-11, Cys-14, Cys-23, and His-25 together coordinate Zn(2+). 2 disordered regions span residues 128 to 198 and 216 to 242; these read FLRK…IFTP and YNSS…AAPH. Ser-143 carries the post-translational modification Phosphoserine. Positions 153–178 are enriched in basic and acidic residues; the sequence is SEKKERSRLQQEPIRHFSNCCKKDKS. 2 stretches are compositionally biased toward polar residues: residues 179 to 190 and 228 to 238; these read QNPASNGKTNKA and ETLTPQSTTTI. Tandem repeats lie at residues 264–279 and 322–337. Residues 264–337 are 2 X 16 AA repeat of C-X-C-X(4)-C-X-C-X-X-C-X-X-H; it reads CSCEDESCPC…NCTCDGCFSH (74 aa).

The protein resides in the nucleus. In terms of biological role, regulatory protein involved in Cu/Fe utilization and stress resistance. Involved in basal level transcription of FRE1 and H(2)O(2)-induced transcription of CTT1. Regulates the transcription of CTR1 and CTR3 via the copper ion responsive elements in their promoters. Required for degradation of CTR1. This Saccharomyces cerevisiae (strain ATCC 204508 / S288c) (Baker's yeast) protein is Metal-binding activator 1 (MAC1).